Here is a 387-residue protein sequence, read N- to C-terminus: Norsolorinic acid reductase stcV (387 aa).

Residue Asp69 coordinates NADP(+). Tyr74 functions as the Proton donor in the catalytic mechanism. His148 provides a ligand contact to substrate. NADP(+) contacts are provided by residues Ser178–Asp179, Gln204, Gly233–Ala243, and Arg301–Asn309.

Belongs to the aldo/keto reductase family. Aldo/keto reductase 2 subfamily.

It participates in mycotoxin biosynthesis; sterigmatocystin biosynthesis. In terms of biological role, norsolorinic acid reductase; part of the gene cluster that mediates the biosynthesis of sterigmatocystin (ST), a polyketide-derived furanocoumarin which is part of the most toxic and carcinogenic compounds among the known mycotoxins. The first step in the biosynthesis of sterigmatocystin is the production of hexanoate by the fatty acid synthase (FAS) units stcJ and stcK. The polyketide backbone is assembled by the non-reducing polyketide synthase stcA by condensation of the starter hexanoyl-CoA and 7 malonyl-CoA extender units followed by cyclization and release of norsolorinic acid. Norsolorinic acid is the first stable intermediate in the biosynthesis of sterigmatocystin and is converted into averantin (AVN) by the ketoreductase stcE which reduces the hexanoate ketone to an alcohol. Averantin is then oxidized into 5'-hydroxyaverantin (HAVN) by the cytochrome P450 monooxygenase stcF. 5'-hydroxyaverantin is further converted to 5'-oxyaverantin (OAVN) by the 5'-hydroxyaverantin dehydrogenase stcG. The next step is the conversion of OAVN into averufin (AVF) which is catalyzed by a yet to be identified enzyme. The cytochrome P450 monooxygenase stcB and the flavin-binding monooxygenase stcW are both required for the conversion of averufin to 1-hydroxyversicolorone. The esterase stcI probably catalyzes the formation of versiconal hemiacetal acetate from 1-hydroxyversicolorone. The oxydoreductase stcN then probably catalyzes the biosynthetic step from versiconal to versicolorin B (VERB). The next step is performed by the versicolorin B desaturase stcL to produce versicolorin A (VERA). The ketoreductase stcU and the cytochrome P450 monooxygenase stcS are involved in the conversion of versicolorin A to demethylsterigmatocystin. The Baeyer-Villiger oxidas stcQ and the reductase stcR might be involved in the biosynthetic step from versicolorin A to demethylsterigmatocystin. The final step in the biosynthesis of sterigmatocystin is the methylation of demethylsterigmatocystin catalyzed by the methyltransferase stcP. The sequence is that of Norsolorinic acid reductase stcV from Emericella nidulans (strain FGSC A4 / ATCC 38163 / CBS 112.46 / NRRL 194 / M139) (Aspergillus nidulans).